We begin with the raw amino-acid sequence, 382 residues long: ATP phosphoribosyltransferase regulatory subunit (382 aa).

Belongs to the class-II aminoacyl-tRNA synthetase family. HisZ subfamily. In terms of assembly, heteromultimer composed of HisG and HisZ subunits.

It is found in the cytoplasm. Its pathway is amino-acid biosynthesis; L-histidine biosynthesis; L-histidine from 5-phospho-alpha-D-ribose 1-diphosphate: step 1/9. Its function is as follows. Required for the first step of histidine biosynthesis. May allow the feedback regulation of ATP phosphoribosyltransferase activity by histidine. The polypeptide is ATP phosphoribosyltransferase regulatory subunit (Burkholderia lata (strain ATCC 17760 / DSM 23089 / LMG 22485 / NCIMB 9086 / R18194 / 383)).